The following is a 226-amino-acid chain: MYHIELKKEALLPRERLVDLGADRLSNQELLAILLRTGIKEKPVLEISTQILENISSLADFGQLSLQELQSIKGIGQVKSVEIKAMLELAKRIHKAEYDRKEQILSSEQLARKMMLELGDKKQEHLVAIYMDTQNRIIEQRTIFIGTVRRSVAEPREILHYACKNMATSLIIIHNHPSGSPNPSESDLSFTKKIKRSCDHLGIVCLDHIIVGKNKYYSFREEADIL.

The MPN domain maps to 103-225 (QILSSEQLAR…YYSFREEADI (123 aa)). The Zn(2+) site is built by H174, H176, and D187. Positions 174 to 187 (HNHPSGSPNPSESD) match the JAMM motif motif.

It belongs to the UPF0758 family.

The polypeptide is UPF0758 protein gbs1168 (Streptococcus agalactiae serotype III (strain NEM316)).